The primary structure comprises 288 residues: Transformer-2 protein homolog beta (288 aa).

Disordered regions lie at residues 1-114 (MSDS…RANP) and 196-225 (TKRP…YDRG). Position 2 is an N-acetylserine (serine 2). Residues serine 2, serine 4, and serine 14 each carry the phosphoserine modification. Over residues 17–28 (ASRSGSAHGSGK) the composition is skewed to low complexity. Serine 29 is subject to Phosphoserine. Threonine 33 is modified (phosphothreonine). Basic residues predominate over residues 59–109 (RSRRSSRRHYTRSRSRSRSHRRSRSRSYSRDYRRRHSHSHSPMSTRRRHVG). Phosphoserine is present on residues serine 83, serine 85, serine 87, serine 95, serine 97, and serine 99. Threonine 103 carries the post-translational modification Phosphothreonine. An RRM domain is found at 118–196 (CCLGVFGLSL…RRIRVDFSIT (79 aa)). The tract at residues 193–230 (FSITKRPHTPTPGIYMGRPTYGSSRRRDYYDRGYDRGY) is linker. Lysine 197 participates in a covalent cross-link: Glycyl lysine isopeptide (Lys-Gly) (interchain with G-Cter in SUMO2). Phosphothreonine is present on residues threonine 201 and threonine 203. A phosphoserine mark is found at serine 215 and serine 237. The residue at position 241 (arginine 241) is an Asymmetric dimethylarginine; alternate. Arginine 241 is subject to Dimethylated arginine; alternate. An Omega-N-methylarginine; alternate modification is found at arginine 241. The tract at residues 242-288 (GGGGGGGGWRAAQDRDQIYRRRSPSPYYSRGGYRSRSRSRSYSPRRY) is disordered. Over residues 274 to 288 (YRSRSRSRSYSPRRY) the composition is skewed to basic residues.

The protein belongs to the splicing factor SR family. As to quaternary structure, found in a pre-mRNA exonic splicing enhancer (ESE) complex with TRA2B/SFRS10, SNRNP70, SNRPA1 and SRRM1. Binds to A3 enhancer proteins SFRS4, SFRS5, SFRS6 and SFRS9. Interacts with CPSF6, RBMY1A1, RBMX, RNPS1 and phosphorylated SFRS13A. Interacts with SAFB/SAFB1. Interacts with ILDR1 (via C-terminus) and ILDR2. In terms of processing, phosphorylated in the RS domains.

It is found in the nucleus. Its function is as follows. Sequence-specific RNA-binding protein which participates in the control of pre-mRNA splicing. Can either activate or suppress exon inclusion. Acts additively with RBMX to promote exon 7 inclusion of the survival motor neuron SMN2. Activates the splicing of MAPT/Tau exon 10. Alters pre-mRNA splicing patterns by antagonizing the effects of splicing regulators, like RBMX. Binds to the AG-rich SE2 domain in the SMN exon 7 RNA. Binds to pre-mRNA. The polypeptide is Transformer-2 protein homolog beta (TRA2B) (Bos taurus (Bovine)).